The primary structure comprises 145 residues: Protoporphyrinogen IX oxidase (145 aa).

4 helical membrane passes run leucine 6 to leucine 26, alanine 61 to leucine 81, threonine 83 to alanine 103, and isoleucine 123 to proline 143. Histidine 12 lines the heme pocket. Lysine 88 is a binding site for heme.

The protein belongs to the HemJ family. Homodimer. The cofactor is heme b.

The protein resides in the cell membrane. It carries out the reaction protoporphyrinogen IX + 3 A = protoporphyrin IX + 3 AH2. The protein operates within porphyrin-containing compound metabolism; protoporphyrin-IX biosynthesis; protoporphyrin-IX from protoporphyrinogen-IX: step 1/1. Catalyzes the oxidation of protoporphyrinogen IX to protoporphyrin IX. Is involved in the biosynthesis of tetrapyrrole molecules like heme. Does not use oxygen or artificial electron acceptors such as menadione or benzoquinone. The chain is Protoporphyrinogen IX oxidase from Rickettsia prowazekii (strain Madrid E).